A 489-amino-acid polypeptide reads, in one-letter code: Metalloreductase STEAP2 (489 aa).

NADP(+) contacts are provided by residues 37–40 (SGDF), 59–60 (SR), 92–99 (IHREHYTS), Asn-117, and Ala-150. FAD-binding residues include Trp-151 and Asp-159. A helical membrane pass occupies residues 207–227 (LFTLWRGPVVVAISLATFFFL). Tyr-228 contacts Fe(3+). A helical transmembrane segment spans residues 258–278 (LPIVAITLLSLVYLAGLLAAA). In terms of domain architecture, Ferric oxidoreductase spans 258-406 (LPIVAITLLS…LGYVALLITT (149 aa)). FAD-binding residues include Gln-280 and Arg-301. The next 4 helical transmembrane spans lie at 304–324 (LGLL…CLPM), 358–378 (MYIS…VTSI), 392–412 (FIQS…VLIY), and 431–451 (FVLA…LLLP). His-315 is a heme b binding site. Residue Tyr-318 participates in Fe(3+) binding. 2 residues coordinate FAD: Ser-377 and Gln-394. His-408 is a binding site for heme b. The residue at position 482 (Ser-482) is a Phosphoserine.

It belongs to the STEAP family. It depends on FAD as a cofactor. Heme b serves as cofactor.

The protein resides in the cell membrane. It localises to the endosome membrane. The catalysed reaction is 2 Fe(2+) + NADP(+) + H(+) = 2 Fe(3+) + NADPH. It catalyses the reaction 2 Cu(+) + NADP(+) + H(+) = 2 Cu(2+) + NADPH. In terms of biological role, integral membrane protein that functions as a NADPH-dependent ferric-chelate reductase, using NADPH from one side of the membrane to reduce a Fe(3+) chelate that is bound on the other side of the membrane. Mediates sequential transmembrane electron transfer from NADPH to FAD and onto heme, and finally to the Fe(3+) chelate. Can also reduce Cu(2+) to Cu(1+). This Mus musculus (Mouse) protein is Metalloreductase STEAP2 (Steap2).